The following is a 361-amino-acid chain: MTPTVTVQLTDDTAKRFEGHAKLLAIGTATPTNWVDQATYPDFYFRITNSEHLLEHKEKFRRICNKSKIRKRHLVLTEELLKENPNLCTYNDASLNTRQDILVSEVPKLGKEAAMKAIKEWGRPISEITHLVFCTTSGVDMPGADFQLTKLLGLNSSVKRLMMYQQGCNAGAAMLRLVKGLAENNKGARVLVVCSGITINIFRGPSLEQDDNLLAQCLFGDGSAAMIDGKDPRPGLETPLFELVSSAQTIVPNTDSHLKLHLREMGLTFHCSRAVPSVLAENVEDCLVKAFEPYGISDWNSIFWVFHPGGNAIVDRVEERSGLGPERLRASRDVLSEYGNLTSACVLFILDEMRKKSKKDE.

The active site involves C168.

The protein belongs to the thiolase-like superfamily. Chalcone/stilbene synthases family.

The enzyme catalyses (E)-4-coumaroyl-CoA + 3 malonyl-CoA + 3 H(+) = 2',4,4',6'-tetrahydroxychalcone + 3 CO2 + 4 CoA. The protein operates within secondary metabolite biosynthesis; flavonoid biosynthesis. Functionally, the primary product of this enzyme is 4,2',4',6'-tetrahydroxychalcone (also termed naringenin-chalcone or chalcone) which can under specific conditions spontaneously isomerize into naringenin. This is Chalcone synthase A (CHSA) from Ipomoea cordatotriloba (Tievine).